Consider the following 99-residue polypeptide: Malonate decarboxylase acyl carrier protein (99 aa).

Position 25 is an O-(phosphoribosyl dephospho-coenzyme A)serine (Ser-25).

The protein belongs to the MdcC family. Post-translationally, covalently binds the prosthetic group of malonate decarboxylase.

The protein resides in the cytoplasm. Its function is as follows. Subunit of malonate decarboxylase, it is an acyl carrier protein to which acetyl and malonyl thioester residues are bound via a 2'-(5''-phosphoribosyl)-3'-dephospho-CoA prosthetic group and turn over during the catalytic mechanism. This chain is Malonate decarboxylase acyl carrier protein, found in Pseudomonas fluorescens (strain SBW25).